We begin with the raw amino-acid sequence, 293 residues long: RNA pseudouridylate synthase domain-containing protein 1 (293 aa).

Aspartate 67 is a catalytic residue.

It belongs to the pseudouridine synthase RluA family.

The chain is RNA pseudouridylate synthase domain-containing protein 1 (rpusd1) from Danio rerio (Zebrafish).